The chain runs to 229 residues: Large ribosomal subunit protein uL1 (229 aa).

It belongs to the universal ribosomal protein uL1 family. In terms of assembly, part of the 50S ribosomal subunit.

In terms of biological role, binds directly to 23S rRNA. The L1 stalk is quite mobile in the ribosome, and is involved in E site tRNA release. Protein L1 is also a translational repressor protein, it controls the translation of the L11 operon by binding to its mRNA. The sequence is that of Large ribosomal subunit protein uL1 from Latilactobacillus sakei subsp. sakei (strain 23K) (Lactobacillus sakei subsp. sakei).